The chain runs to 394 residues: F-box protein At2g17830 (394 aa).

Residues 1 to 47 (MAIMSDLPRDLLAEILSRVPLASLRSVRFTCKKWNDLSKDRSFLKKQ) form the F-box domain.

In Arabidopsis thaliana (Mouse-ear cress), this protein is F-box protein At2g17830.